Reading from the N-terminus, the 89-residue chain is MNPIGLGMRGLIRLYQLLLSPVLPASCRFTPSCSSYAMQAIEAHGPVGGTWLGLKRICRCHPWNDGGYDPVPPAHTERGGTMCPSRLPE.

Positions 69–89 are disordered; sequence DPVPPAHTERGGTMCPSRLPE.

Belongs to the UPF0161 family.

It localises to the cell inner membrane. In terms of biological role, could be involved in insertion of integral membrane proteins into the membrane. This Paramagnetospirillum magneticum (strain ATCC 700264 / AMB-1) (Magnetospirillum magneticum) protein is Putative membrane protein insertion efficiency factor.